Here is a 932-residue protein sequence, read N- to C-terminus: uncharacterized protein (932 aa).

Disordered regions lie at residues 26-120 (NINN…NMLT), 158-289 (MGIG…EEKK), 304-617 (NNNN…INHD), 635-720 (QQSQ…PPLV), and 802-863 (SVSS…FPLE). Composition is skewed to low complexity over residues 41 to 105 (NNNI…IISS) and 163 to 241 (NNNN…YGNN). Polar residues predominate over residues 242–253 (TPVNYIHNNSTP). Residues 265 to 285 (SDEEDSVLYSSDDSEESDYEE) show a composition bias toward acidic residues. The span at 304 to 475 (NNNNINNNNM…NNNNNNNNNN (172 aa)) shows a compositional bias: low complexity. 2 stretches are compositionally biased toward polar residues: residues 476-492 (ENYV…NTES) and 527-540 (DIPN…TKQQ). A compositionally biased stretch (low complexity) spans 548–590 (SPVYSPPNNLSPLSSPYLHHNSNNNSNNGGGNSNNNNTNFNYG). The span at 606 to 617 (GERDPPHVINHD) shows a compositional bias: basic and acidic residues. Composition is skewed to low complexity over residues 635-666 (QQSQ…PSSS), 696-707 (SPPNTSISSLSS), and 813-853 (NSSN…NNNS). Over residues 854–863 (EPKKPKFPLE) the composition is skewed to basic and acidic residues.

This is an uncharacterized protein from Dictyostelium discoideum (Social amoeba).